The primary structure comprises 498 residues: NAD(P)H-quinone oxidoreductase subunit 2, chloroplastic (498 aa).

The next 14 helical transmembrane spans lie at 18-38, 51-71, 87-107, 111-131, 134-154, 168-188, 211-231, 244-264, 278-298, 306-326, 337-357, 379-399, 411-431, and 470-490; these read LTIL…VIDL, ISMV…GFFT, FFLL…ILCS, LAEF…LSCA, LVTI…LSGY, FLLM…LLYG, IIYL…SLFP, PTPV…ALFT, WHVA…LIAV, MLAF…LSAD, YTFI…LFGL, FSLV…GFFG, GLYS…YYYL, and IAMI…DPII.

Belongs to the complex I subunit 2 family. In terms of assembly, NDH is composed of at least 16 different subunits, 5 of which are encoded in the nucleus.

It localises to the plastid. The protein resides in the chloroplast thylakoid membrane. The catalysed reaction is a plastoquinone + NADH + (n+1) H(+)(in) = a plastoquinol + NAD(+) + n H(+)(out). It catalyses the reaction a plastoquinone + NADPH + (n+1) H(+)(in) = a plastoquinol + NADP(+) + n H(+)(out). Its function is as follows. NDH shuttles electrons from NAD(P)H:plastoquinone, via FMN and iron-sulfur (Fe-S) centers, to quinones in the photosynthetic chain and possibly in a chloroplast respiratory chain. The immediate electron acceptor for the enzyme in this species is believed to be plastoquinone. Couples the redox reaction to proton translocation, and thus conserves the redox energy in a proton gradient. This chain is NAD(P)H-quinone oxidoreductase subunit 2, chloroplastic, found in Adiantum capillus-veneris (Maidenhair fern).